Reading from the N-terminus, the 133-residue chain is Gamma-crystallin 1 (133 aa).

The Beta/gamma crystallin 'Greek key' 2 domain maps to 1 to 41; the sequence is WMLYEHPNYTGHQYFLRRGEYPDFQQWMGLNDSIRSCRVIP. The tract at residues 42–46 is connecting peptide; sequence QHRGS. Beta/gamma crystallin 'Greek key' domains lie at 47–87 and 88–130; these read FRLR…NVLE and GHWI…RRVQ.

It belongs to the beta/gamma-crystallin family. In terms of assembly, monomer.

In terms of biological role, crystallins are the dominant structural components of the vertebrate eye lens. The chain is Gamma-crystallin 1 from Rana temporaria (European common frog).